Reading from the N-terminus, the 642-residue chain is 3D-(3,5/4)-trihydroxycyclohexane-1,2-dione hydrolase (642 aa).

Glutamate 71 contacts thiamine diphosphate. The interval 446 to 526 is thiamine pyrophosphate binding; sequence SLPGDVQRIW…INILVFDNSG (81 aa). 2 residues coordinate Mg(2+): aspartate 497 and asparagine 524.

It belongs to the TPP enzyme family. The cofactor is Mg(2+). Requires thiamine diphosphate as cofactor.

The catalysed reaction is 3D-3,5/4-trihydroxycyclohexane-1,2-dione + H2O = 5-deoxy-D-glucuronate + H(+). It participates in polyol metabolism; myo-inositol degradation into acetyl-CoA; acetyl-CoA from myo-inositol: step 3/7. Functionally, involved in the cleavage of the C1-C2 bond of 3D-(3,5/4)-trihydroxycyclohexane-1,2-dione (THcHDO) to yield 5-deoxy-glucuronate (5DG). The sequence is that of 3D-(3,5/4)-trihydroxycyclohexane-1,2-dione hydrolase from Lacticaseibacillus casei (Lactobacillus casei).